A 488-amino-acid polypeptide reads, in one-letter code: Probable phenylalanine--tRNA ligase alpha subunit (488 aa).

The tract at residues Met-1 to Lys-146 is contains the major tRNA-Phe binding sites. Residues Thr-315, Gln-363–Glu-365, and Tyr-403 contribute to the L-phenylalanine site. Glu-405 lines the Mg(2+) pocket. L-phenylalanine is bound at residue Phe-429.

Belongs to the class-II aminoacyl-tRNA synthetase family. Phe-tRNA synthetase alpha subunit type 2 subfamily. In terms of assembly, tetramer of two alpha and two beta subunits. Requires Mg(2+) as cofactor.

The protein localises to the cytoplasm. It catalyses the reaction tRNA(Phe) + L-phenylalanine + ATP = L-phenylalanyl-tRNA(Phe) + AMP + diphosphate + H(+). The sequence is that of Probable phenylalanine--tRNA ligase alpha subunit from Enterocytozoon bieneusi (strain H348) (Microsporidian parasite).